Here is a 143-residue protein sequence, read N- to C-terminus: Small ribosomal subunit protein uS12 (143 aa).

P62 carries the hydroxyproline modification.

It belongs to the universal ribosomal protein uS12 family.

This is Small ribosomal subunit protein uS12 (rps23) from Dictyostelium discoideum (Social amoeba).